We begin with the raw amino-acid sequence, 53 residues long: uncharacterized protein (53 aa).

Positions 1-23 (MSILLKILFKLLLLILSITFVIT) are cleaved as a signal peptide.

This is an uncharacterized protein from Acheta domesticus (House cricket).